A 151-amino-acid polypeptide reads, in one-letter code: SsrA-binding protein (151 aa).

The interval 132 to 151 is disordered; that stretch reads KRQTIKKRDQDREIHRKYGI.

It belongs to the SmpB family.

The protein resides in the cytoplasm. Its function is as follows. Required for rescue of stalled ribosomes mediated by trans-translation. Binds to transfer-messenger RNA (tmRNA), required for stable association of tmRNA with ribosomes. tmRNA and SmpB together mimic tRNA shape, replacing the anticodon stem-loop with SmpB. tmRNA is encoded by the ssrA gene; the 2 termini fold to resemble tRNA(Ala) and it encodes a 'tag peptide', a short internal open reading frame. During trans-translation Ala-aminoacylated tmRNA acts like a tRNA, entering the A-site of stalled ribosomes, displacing the stalled mRNA. The ribosome then switches to translate the ORF on the tmRNA; the nascent peptide is terminated with the 'tag peptide' encoded by the tmRNA and targeted for degradation. The ribosome is freed to recommence translation, which seems to be the essential function of trans-translation. The sequence is that of SsrA-binding protein from Lactobacillus johnsonii (strain CNCM I-12250 / La1 / NCC 533).